Here is a 670-residue protein sequence, read N- to C-terminus: WD repeat-containing protein 48 homolog (670 aa).

7 WD repeats span residues 13–52, 59–98, 101–140, 152–191, 194–233, 236–275, and 278–317; these read RHRNGVNALQLDPVNGRLYSAGRDAIIRVWNSTQTSSQEP, HHNDWVNDIVLCCGGRNLISASCDTTVKVWNAHKGFCMST, THRDYVQALAYAKDREQVASAGLDKAIFLWDVNTLTALTA, GSKDSIYSLAMNPSGTIIVSGSTENTLRIWDPRTCNKIAK, GHTENVKALVVSEDGTQVVSGSSDGKIKLWSIGQQRCIQT, VHSEGVWALLMTDNFSHVISGSRDKKIVMTELRNPTNSVL, and EERAPVLSLCYNIDQTGIWATTWNSDVRCWKLNKTDKLSN. Positions 321-348 are disordered; it reads SSNSSINSGGGGDGTPVTNSASNATPAS. Residues 338–348 show a composition bias toward low complexity; that stretch reads TNSASNATPAS. A WD 8 repeat occupies 359 to 398; that stretch reads KGGAAIKKYHVLNDKRFMLTKDSEQNVAIYDVLKVKKVED. Positions 613–625 are enriched in gly residues; sequence GGGGGSSTGGGGN. Positions 613–645 are disordered; that stretch reads GGGGGSSTGGGGNSNSSQNNSQSDANSEGSQVP. The span at 626-635 shows a compositional bias: low complexity; the sequence is SNSSQNNSQS.

Belongs to the WD repeat WDR48 family. In terms of assembly, catalytic component of the Usp12-46 deubiquitylase complex consisting of Usp12-46, Wdr20 and Uaf1; regulatory subunit that, together wtih Wdr20, stabilizes Usp12-46. The Usp12-46 deubiquitylase complex associates with arr/arrow; the interaction leads to deubiquitination and stabilization of arr/arrow.

Functionally, regulatory component of the Usp12-46 deubiquitylase complex. activates deubiquitination by increasing the catalytic turnover without increasing the affinity of deubiquitinating enzymes for the substrate. The complex deubiquitylates the wg/wingless-signaling receptor arr/arrow, which stabilizes the receptor and increases its concentration at the cell surface; this enhances the sensitivity of cells to wg/wingless-signal stimulation. This increases the amplitude and spatial range of the signaling response to the wg/wingless morphogen gradient, facilitating the precise concentration-dependent regulation of its target genes. Together with Wdr20 and Usp12-46 required for wg/wingless-mediated signaling in the wing imaginal disc and for wg/wingless-dependent regulation of intestinal stem cell proliferation. This Culex quinquefasciatus (Southern house mosquito) protein is WD repeat-containing protein 48 homolog.